A 32-amino-acid chain; its full sequence is Secreted protein F2 (32 aa).

It localises to the secreted. This chain is Secreted protein F2, found in Globisporangium hypogynum (Pythium hypogynum).